A 37-amino-acid chain; its full sequence is Large ribosomal subunit protein bL36 (37 aa).

Belongs to the bacterial ribosomal protein bL36 family.

The chain is Large ribosomal subunit protein bL36 from Dechloromonas aromatica (strain RCB).